Here is a 378-residue protein sequence, read N- to C-terminus: Glutamate 5-kinase (378 aa).

Lys-14 is a binding site for ATP. The substrate site is built by Ser-54, Asp-141, and Asn-153. 173–174 is a binding site for ATP; sequence SD. Residues 279-356 enclose the PUA domain; the sequence is AGRLTVDAGA…DEISAILGYD (78 aa).

Belongs to the glutamate 5-kinase family.

It is found in the cytoplasm. It catalyses the reaction L-glutamate + ATP = L-glutamyl 5-phosphate + ADP. The protein operates within amino-acid biosynthesis; L-proline biosynthesis; L-glutamate 5-semialdehyde from L-glutamate: step 1/2. Functionally, catalyzes the transfer of a phosphate group to glutamate to form L-glutamate 5-phosphate. The polypeptide is Glutamate 5-kinase (Brucella canis (strain ATCC 23365 / NCTC 10854 / RM-666)).